The sequence spans 300 residues: Transacylase cctO (300 aa).

Residues Ile52 to Ile72 traverse the membrane as a helical segment. 2 consecutive short sequence motifs (HXXHC) follow at residues His185–Cys189 and His225–Cys229. N-linked (GlcNAc...) asparagine glycosylation is present at Asn270.

This sequence belongs to the ustYa family.

It is found in the membrane. The protein operates within mycotoxin biosynthesis. Functionally, transacylase; part of the gene cluster that mediates the biosynthesis of the mycotoxin cyclochlorotine, a hepatotoxic and carcinogenic cyclic chlorinated pentapeptide. Within the pathway, cctO catalyzes the intramolecular O,N-transacylation from isocyclochlorotine to cyclochlorotine. The NRPS cctN initially catalyzes the condensation of L-serine (Ser), Pro, L-2-aminobutyrate (2Abu), Ser, and beta-Phe in this order to produce isocyclotine. After the dichlorination of Pro2 catalyzed by cctP2 to produce isocyclochlorotine, the cctO-mediated transacylation of isocyclochlorotine can furnish cyclochlorotine. The subsequent hydroxylation of cyclochlorotine by cctR yields hydroxycyclochlorotine as the final product. CctP1 probably acts as a phenylalanine aminomutase and provides the uncommon building block beta-Phe. Furthermore, 2Abu can be synthesized from threonine by one of the threonine dehydratases and transaminases localized outside of the cluster. The functions of the remaining proteins encoded by the cluster, cctM and cctT, have not been identified yet. The sequence is that of Transacylase cctO from Talaromyces islandicus (Penicillium islandicum).